Consider the following 779-residue polypeptide: Serine/threonine-protein kinase SIK1 (779 aa).

In terms of domain architecture, Protein kinase spans 27-278 (YDVERTLGKG…IAQIRQHRWM (252 aa)). ATP-binding positions include 33–41 (LGKGNFAVV) and lysine 56. The active-site Proton acceptor is the aspartate 149. The residue at position 182 (threonine 182) is a Phosphothreonine; by LKB1 and GSK3-beta. Serine 186 is modified (phosphoserine; by autocatalysis). In terms of domain architecture, UBA spans 303–343 (DYNEQVLGIMQALGIDRQRTIESLQNSSYNHFAAIYYLLLE). A Phosphothreonine; by CaMK1 modification is found at threonine 322. Disordered regions lie at residues 350 to 375 (SAQPSSRPTPAPTRQPQLRSSDLSSL) and 449 to 472 (EARQGPSLEEEQEVQEPLPGSTGR). Residues 363 to 373 (RQPQLRSSDLS) are compositionally biased toward polar residues. Residue serine 577 is modified to Phosphoserine; by PKA. An RK-rich region region spans residues 586-612 (KAFRQQLRKNARTKGFLGLNKIKGLAR). The segment at 621 to 641 (TPRGGMSTFHTPAPSSGLQGC) is disordered. The span at 628 to 641 (TFHTPAPSSGLQGC) shows a compositional bias: polar residues.

It belongs to the protein kinase superfamily. CAMK Ser/Thr protein kinase family. AMPK subfamily. In terms of assembly, interacts (when phosphorylated on Thr-182 and Ser-186) with YWHAZ. Interacts with ATP1A1. The cofactor is Mg(2+). Post-translationally, phosphorylated at Thr-182 by STK11/LKB1 in complex with STE20-related adapter-alpha (STRADA) pseudo kinase and CAB39, leading to its activation. Phosphorylation at Thr-182 promotes autophosphorylation at Ser-186, which is required for sustained activity. Autophosphorylation at Ser-186 is maintained by sequential phosphorylation at Thr-182 by GSK3-beta. GSK3-beta cannot initiate phosphorylation at Thr-182, it can only maintain it. Phosphorylation at Ser-577 by PKA promotes translocation to the cytoplasm. Phosphorylation at Thr-322 by CaMK1 following intracellular sodium concentration leads to activation. As to expression, expressed in lung, skin, ovary, heart and stomach. No expression in brain, liver or adult skeletal muscle but is present in skeletal muscle progenitor cells of the somite beginning at 9.5 dpc. Present at 8.0 dpc in the monolayer of presumptive myocardial cells but rapidly down-regulated at 8.5 dpc upon primitive ventricle formation, although still present in myocardial cells that will populate the primitive atrium and bulbus cordis. At 9.5 dpc expression is down-regulated in the primitive atrium but observed in the sinus venosus and truncus arteriosus.

The protein localises to the cytoplasm. It is found in the nucleus. The enzyme catalyses L-seryl-[protein] + ATP = O-phospho-L-seryl-[protein] + ADP + H(+). It carries out the reaction L-threonyl-[protein] + ATP = O-phospho-L-threonyl-[protein] + ADP + H(+). Activated by phosphorylation on Thr-182. Also activated by phosphorylation on Thr-322 in response to increases in intracellular sodium in parallel with elevations in intracellular calcium through the reversible sodium/calcium exchanger. Serine/threonine-protein kinase involved in various processes such as cell cycle regulation, gluconeogenesis and lipogenesis regulation, muscle growth and differentiation and tumor suppression. Phosphorylates HDAC4, HDAC5, PPME1, SREBF1, CRTC1/TORC1 and CRTC2/TORC2. Acts as a tumor suppressor and plays a key role in p53/TP53-dependent anoikis, a type of apoptosis triggered by cell detachment: required for phosphorylation of p53/TP53 in response to loss of adhesion and is able to suppress metastasis. Part of a sodium-sensing signaling network, probably by mediating phosphorylation of PPME1: following increases in intracellular sodium, SIK1 is activated by CaMK1 and phosphorylates PPME1 subunit of protein phosphatase 2A (PP2A), leading to dephosphorylation of sodium/potassium-transporting ATPase ATP1A1 and subsequent increase activity of ATP1A1. Acts as a regulator of muscle cells by phosphorylating and inhibiting class II histone deacetylases HDAC4 and HDAC5, leading to promote expression of MEF2 target genes in myocytes. Also required during cardiomyogenesis by regulating the exit of cardiomyoblasts from the cell cycle via down-regulation of CDKN1C/p57Kip2. Acts as a regulator of hepatic gluconeogenesis by phosphorylating and repressing the CREB-specific coactivators CRTC1/TORC1 and CRTC2/TORC2, leading to inhibit CREB activity. Also regulates hepatic lipogenesis by phosphorylating and inhibiting SREBF1. In concert with CRTC1/TORC1, regulates the light-induced entrainment of the circadian clock by attenuating PER1 induction; represses CREB-mediated transcription of PER1 by phosphorylating and deactivating CRTC1/TORC1. This Mus musculus (Mouse) protein is Serine/threonine-protein kinase SIK1 (Sik1).